The sequence spans 283 residues: Elongation factor Ts (283 aa).

An involved in Mg(2+) ion dislocation from EF-Tu region spans residues 80–83 (TDFV).

It belongs to the EF-Ts family.

The protein localises to the cytoplasm. Functionally, associates with the EF-Tu.GDP complex and induces the exchange of GDP to GTP. It remains bound to the aminoacyl-tRNA.EF-Tu.GTP complex up to the GTP hydrolysis stage on the ribosome. The polypeptide is Elongation factor Ts (Haemophilus influenzae (strain PittEE)).